Here is a 163-residue protein sequence, read N- to C-terminus: Peptidyl-prolyl cis-trans isomerase-like 1 (163 aa).

The region spanning 1 to 155 (MATDVAVETT…TEVKIVKARV (155 aa)) is the PPIase cyclophilin-type domain.

Belongs to the cyclophilin-type PPIase family. PPIL1 subfamily.

It carries out the reaction [protein]-peptidylproline (omega=180) = [protein]-peptidylproline (omega=0). PPIases accelerate the folding of proteins. It catalyzes the cis-trans isomerization of proline imidic peptide bonds in oligopeptides. This chain is Peptidyl-prolyl cis-trans isomerase-like 1 (ppi-1), found in Neurospora crassa (strain ATCC 24698 / 74-OR23-1A / CBS 708.71 / DSM 1257 / FGSC 987).